Here is a 208-residue protein sequence, read N- to C-terminus: NAD(P)H dehydrogenase (quinone) (208 aa).

The Flavodoxin-like domain occupies 4–192 (VLVLYYSSYG…DGARFQGRHV (189 aa)). Residues 10-15 (SSYGHV) and 78-80 (TRF) each bind FMN. NAD(+) is bound at residue Tyr-12. Trp-98 provides a ligand contact to substrate. Residues 113-119 (STGSQHG) and His-134 each bind FMN. A disordered region spans residues 161-183 (YGASTLADDGDGGDRQPSANELD).

This sequence belongs to the WrbA family. FMN is required as a cofactor.

It carries out the reaction a quinone + NADH + H(+) = a quinol + NAD(+). The catalysed reaction is a quinone + NADPH + H(+) = a quinol + NADP(+). This is NAD(P)H dehydrogenase (quinone) from Paracoccus denitrificans (strain Pd 1222).